The following is a 242-amino-acid chain: Vacuolar protein sorting-associated protein 28 (242 aa).

One can recognise a VPS28 N-terminal domain in the interval 11–125; the sequence is NQDISQLFHD…ERGIPITAEH (115 aa). The VPS28 C-terminal domain maps to 148–242; that stretch reads FNAKYVAEAT…AYKSFYALLD (95 aa). Residues 148–242 are interaction with VSP36 and VPS20; sequence FNAKYVAEAT…AYKSFYALLD (95 aa).

Belongs to the VPS28 family. In terms of assembly, component of the ESCRT-I complex (endosomal sorting complex required for transport I) which consists of STP22, VPS28, SRN2 and MVB12 in a 1:1:1:1 stoichiometry. Self-associates. Interacts with VPS27; the interaction mediates the association with the ESCRT-0 complex. Interacts with VPS20; the interaction mediates the association with the ESCRT-III complex.

The protein localises to the cytoplasm. The protein resides in the endosome. It localises to the late endosome membrane. In terms of biological role, component of the ESCRT-I complex, a regulator of vesicular trafficking process. Required for normal endocytic and biosynthetic traffic to the yeast vacuole. The polypeptide is Vacuolar protein sorting-associated protein 28 (VPS28) (Saccharomyces cerevisiae (strain ATCC 204508 / S288c) (Baker's yeast)).